A 1014-amino-acid chain; its full sequence is Pre-mRNA-processing ATP-dependent RNA helicase prp11 (1014 aa).

Over residues 1–11 (MSRRTRSRSPP) the composition is skewed to basic residues. The tract at residues 1 to 149 (MSRRTRSRSP…SRFDRTERVG (149 aa)) is disordered. Composition is skewed to basic and acidic residues over residues 15–87 (YNRE…EYAR) and 106–121 (RHAEEKEVDNKTKSDE). The Q motif motif lies at 418-446 (TSWSQCGLSAQTISVINSLGYEKPTSIQA). Residues 449–627 (IPAITSGRDV…RKVLKKPVEI (179 aa)) form the Helicase ATP-binding domain. Residue 462 to 469 (AKTGSGKT) participates in ATP binding. Residues 575 to 578 (DEAD) carry the DEAD box motif. In terms of domain architecture, Helicase C-terminal spans 638–802 (EVEQIVEVRP…PVPKELQTLA (165 aa)). Positions 815–875 (KAAGGGFGGK…PEKSTGDPTL (61 aa)) are disordered. Composition is skewed to basic and acidic residues over residues 827 to 838 (SRLDETRNAERK) and 855 to 875 (AEAKSPLEKITPEKSTGDPTL).

Belongs to the DEAD box helicase family. DDX46/PRP5 subfamily.

Its subcellular location is the nucleus. The enzyme catalyses ATP + H2O = ADP + phosphate + H(+). Its function is as follows. ATP-dependent RNA helicase involved in pre-spliceosome/complex A assembly and mRNA splicing. Bridges U1 and U2 snRNPs during pre-spliceosome assembly and enables stable U2 snRNP association with intron RNA. Through its helicase activity probably catalyzes an ATP-dependent conformational change of U2 snRNP. This is Pre-mRNA-processing ATP-dependent RNA helicase prp11 (prp11) from Schizosaccharomyces pombe (strain 972 / ATCC 24843) (Fission yeast).